The chain runs to 249 residues: Type III pantothenate kinase (249 aa).

6 to 13 contacts ATP; it reads DCGNSFIK. Substrate contacts are provided by residues Tyr93 and 100–103; that span reads GLDR. The active-site Proton acceptor is the Asp102. Asp122 contacts K(+). Thr125 is an ATP binding site. Thr181 contacts substrate.

Belongs to the type III pantothenate kinase family. Homodimer. It depends on NH4(+) as a cofactor. K(+) is required as a cofactor.

It is found in the cytoplasm. The catalysed reaction is (R)-pantothenate + ATP = (R)-4'-phosphopantothenate + ADP + H(+). Its pathway is cofactor biosynthesis; coenzyme A biosynthesis; CoA from (R)-pantothenate: step 1/5. Functionally, catalyzes the phosphorylation of pantothenate (Pan), the first step in CoA biosynthesis. The polypeptide is Type III pantothenate kinase (Pseudomonas savastanoi pv. phaseolicola (strain 1448A / Race 6) (Pseudomonas syringae pv. phaseolicola (strain 1448A / Race 6))).